A 228-amino-acid chain; its full sequence is Lipoprotein-releasing system ATP-binding protein LolD (228 aa).

The ABC transporter domain maps to 9-228 (LEAHDIQKNF…ELINGCLYRR (220 aa)). ATP is bound at residue 44–51 (GRSGEGKS).

It belongs to the ABC transporter superfamily. Lipoprotein translocase (TC 3.A.1.125) family. As to quaternary structure, the complex is composed of two ATP-binding proteins (LolD) and two transmembrane proteins (LolC and LolE).

The protein resides in the cell inner membrane. Part of the ABC transporter complex LolCDE involved in the translocation of mature outer membrane-directed lipoproteins, from the inner membrane to the periplasmic chaperone, LolA. Responsible for the formation of the LolA-lipoprotein complex in an ATP-dependent manner. This chain is Lipoprotein-releasing system ATP-binding protein LolD, found in Protochlamydia amoebophila (strain UWE25).